The primary structure comprises 102 residues: Mitochondrial import inner membrane translocase subunit Tim10 B (102 aa).

The Twin CX3C motif signature appears at 27–51; sequence CFQRCVPSLHHRALDAEEEACLHSC. Cystine bridges form between Cys-27–Cys-51 and Cys-31–Cys-47.

As to quaternary structure, component of the TIM22 complex, which core is composed of TIMM22, associated with TIMM10 (TIMM10A and/or TIMM10B), TIMM9, AGK and TIMM29.

The protein resides in the mitochondrion inner membrane. Component of the TIM22 complex, a complex that mediates the import and insertion of multi-pass transmembrane proteins into the mitochondrial inner membrane. The TIM22 complex forms a twin-pore translocase that uses the membrane potential as the external driving force. In the TIM22 complex, it may act as a docking point for the soluble 70 kDa complex that guides the target proteins in transit through the aqueous mitochondrial intermembrane space. In Pongo abelii (Sumatran orangutan), this protein is Mitochondrial import inner membrane translocase subunit Tim10 B (TIMM10B).